We begin with the raw amino-acid sequence, 102 residues long: NADH-quinone oxidoreductase subunit K (102 aa).

The next 3 membrane-spanning stretches (helical) occupy residues 5 to 25, 31 to 51, and 66 to 86; these read ITHYLTVSALMFTIGIAGIFL, IIILMSIELILLSVNINFVAF, and FVLTVAAAEAAIGLAILVVFF.

This sequence belongs to the complex I subunit 4L family. As to quaternary structure, NDH-1 is composed of 14 different subunits. Subunits NuoA, H, J, K, L, M, N constitute the membrane sector of the complex.

Its subcellular location is the cell inner membrane. The catalysed reaction is a quinone + NADH + 5 H(+)(in) = a quinol + NAD(+) + 4 H(+)(out). Its function is as follows. NDH-1 shuttles electrons from NADH, via FMN and iron-sulfur (Fe-S) centers, to quinones in the respiratory chain. The immediate electron acceptor for the enzyme in this species is believed to be ubiquinone. Couples the redox reaction to proton translocation (for every two electrons transferred, four hydrogen ions are translocated across the cytoplasmic membrane), and thus conserves the redox energy in a proton gradient. The protein is NADH-quinone oxidoreductase subunit K of Bartonella tribocorum (strain CIP 105476 / IBS 506).